The chain runs to 126 residues: MRHQKSGRKFNRTDAHRGAMFSNMVASLFKYQLIKTTLPKAKELRRVAEPLITLAKVDSVANRRLAFARLRNKEAVGILFSNLGPRYITRPGGYIRLLKCGFRHGDNAPMAYVEMLERPIIAEEVT.

It belongs to the bacterial ribosomal protein bL17 family. As to quaternary structure, part of the 50S ribosomal subunit. Contacts protein L32.

This chain is Large ribosomal subunit protein bL17, found in Xylella fastidiosa (strain M12).